The primary structure comprises 515 residues: Glucose-6-phosphate 1-dehydrogenase X (515 aa).

Position 2 is an N-acetylalanine (Ala-2). Residues 38-45 (GASGDLAK), Arg-72, Tyr-147, and Lys-171 each bind NADP(+). Residues Lys-171, 201 to 205 (HYLGK), Glu-239, and Asp-258 each bind D-glucose 6-phosphate. Catalysis depends on His-263, which acts as the Proton acceptor. Arg-357 lines the NADP(+) pocket. D-glucose 6-phosphate contacts are provided by Lys-360 and Arg-365. NADP(+)-binding residues include Lys-366, Arg-370, and Arg-393. Gln-395 provides a ligand contact to D-glucose 6-phosphate. NADP(+) contacts are provided by residues 401–403 (YTK), 421–423 (DLT), Arg-487, and Tyr-503. Tyr-507 carries the phosphotyrosine modification. Trp-509 contacts NADP(+).

Belongs to the glucose-6-phosphate dehydrogenase family. Homotetramer; dimer of dimers. Interacts with SIRT2; the interaction is enhanced by H(2)O(2) treatment. Forms a ternary complex with ALDOB and TP53; this interaction is direct. ALDOB stabilizes the complex inhibiting G6PD activity and keeping oxidative pentose phosphate metabolism in check. Acetylated by ELP3 at Lys-403; acetylation inhibits its homodimerization and enzyme activity. Deacetylated by SIRT2 at Lys-403; deacetylation stimulates its enzyme activity.

The protein localises to the cytoplasm. It localises to the cytosol. It is found in the membrane. It catalyses the reaction D-glucose 6-phosphate + NADP(+) = 6-phospho-D-glucono-1,5-lactone + NADPH + H(+). The protein operates within carbohydrate degradation; pentose phosphate pathway; D-ribulose 5-phosphate from D-glucose 6-phosphate (oxidative stage): step 1/3. Functionally, catalyzes the rate-limiting step of the oxidative pentose-phosphate pathway, which represents a route for the dissimilation of carbohydrates besides glycolysis. The main function of this enzyme is to provide reducing power (NADPH) and pentose phosphates for fatty acid and nucleic acid synthesis. The polypeptide is Glucose-6-phosphate 1-dehydrogenase X (G6pdx) (Mus musculus (Mouse)).